The primary structure comprises 220 residues: Type II restriction enzyme NspV (220 aa).

It carries out the reaction Endonucleolytic cleavage of DNA to give specific double-stranded fragments with terminal 5'-phosphates.. Its function is as follows. A P subtype restriction enzyme that recognizes the double-stranded sequence 5'-TTCGAA-3' and cleaves after T-2. This Nostoc sp. (strain ATCC 29411 / PCC 7524) protein is Type II restriction enzyme NspV.